The primary structure comprises 259 residues: Translation initiation factor IF-2, chloroplastic (259 aa).

Positions 171–259 (LRAPIVAVLG…LLIIAADEGI (89 aa)) constitute a tr-type G domain. Residue 180-187 (GHVNHGKT) coordinates GTP.

It belongs to the TRAFAC class translation factor GTPase superfamily. Classic translation factor GTPase family. IF-2 subfamily.

It is found in the plastid. The protein resides in the chloroplast. One of the essential components for the initiation of protein synthesis. Protects formylmethionyl-tRNA from spontaneous hydrolysis and promotes its binding to the 30S ribosomal subunits. Also involved in the hydrolysis of GTP during the formation of the 70S ribosomal complex. This chain is Translation initiation factor IF-2, chloroplastic (infB), found in Galdieria sulphuraria (Red alga).